Reading from the N-terminus, the 696-residue chain is Glutamate-rich protein 6B (696 aa).

Residues 1–10 (MSAENNQLSG) show a composition bias toward polar residues. Positions 1 to 105 (MSAENNQLSG…EYLEKAGYLE (105 aa)) are disordered. Composition is skewed to acidic residues over residues 32–44 (EDTEVELDEESLQ) and 54–72 (ESLEDKEYLEEEEDLEEEE). Residues 73-91 (YLGKEEYLKEEEYLGKEEH) are compositionally biased toward basic and acidic residues.

It belongs to the ERICH6 family.

In Homo sapiens (Human), this protein is Glutamate-rich protein 6B (ERICH6B).